The chain runs to 23 residues: Coenzyme PQQ synthesis protein A (23 aa).

Residues 15-19 (EVTMY) constitute a cross-link (pyrroloquinoline quinone (Glu-Tyr)).

This sequence belongs to the PqqA family.

Its pathway is cofactor biosynthesis; pyrroloquinoline quinone biosynthesis. Required for coenzyme pyrroloquinoline quinone (PQQ) biosynthesis. PQQ is probably formed by cross-linking a specific glutamate to a specific tyrosine residue and excising these residues from the peptide. In Pseudomonas putida (strain W619), this protein is Coenzyme PQQ synthesis protein A.